Reading from the N-terminus, the 331-residue chain is Probable allantoicase (331 aa).

The protein belongs to the allantoicase family.

It catalyses the reaction allantoate + H2O = (S)-ureidoglycolate + urea. The protein operates within nitrogen metabolism; (S)-allantoin degradation; (S)-ureidoglycolate from allantoate (aminidohydrolase route): step 1/1. This Pseudomonas syringae pv. syringae (strain B728a) protein is Probable allantoicase.